Reading from the N-terminus, the 395-residue chain is GPI-anchor transamidase (395 aa).

Residues 1–27 form the signal peptide; that stretch reads MVDTCFLSRGLTTLAGLLLLPFGSLAA. Residues 28 to 368 lie on the Lumenal side of the membrane; sequence SQIEDQAEQF…PKLKDWHPPG (341 aa). The Ca(2+) site is built by Asp79, Ile82, Glu118, and Asp120. The active-site Proton donor is His164. The active-site Nucleophile; acyl-thioester intermediate is Cys206. A protein contacts are provided by Cys206, Ser232, and Ser234. Residues 231-236 are autoinhibitory loop; that stretch reads DSLSHQ. Cysteines 275 and 280 form a disulfide. Residues 369–385 form a helical membrane-spanning segment; it reads GFILGLWALIIMVFFKT. Topologically, residues 386 to 395 are cytoplasmic; the sequence is YGIKHMKFIF.

Belongs to the peptidase C13 family. Heteropentamer. Part of the GPI-anchor transamidase complex, consisting of PIGK, PIGT, PIGS, PIGU and GAA1. Interacts with GPAA1. Interacts with PIGT; this interaction, via a disulfide link, stabilizes the expression of GAA1 and PIGK and links them to PIGS. The disulfide bond between PIGK/GPI8 and PIGT is important for normal enzyme activity.

Its subcellular location is the endoplasmic reticulum membrane. Its pathway is glycolipid biosynthesis; glycosylphosphatidylinositol-anchor biosynthesis. In the absence of proproteins substrates, exists in an inactive state with a disrupted catalytic site by an autoinhibitory loop. The binding of proprotein substrates, particularly the CSP region, to GPI-T triggers concerted conformational changes that alleviate the inhibition by the autoinhibitory loop. Meanwhile, proprotein residues near the omega- site induce the formation of a catalytic cleft for catalysis, following which the products are released and GPI-T reverts to the inactive state. Catalytic subunit of the glycosylphosphatidylinositol-anchor (GPI-anchor) transamidase (GPI-T) complex that catalyzes the formation of the linkage between a proprotein and a GPI-anchor and participates in GPI anchored protein biosynthesis. Recognizes diverse proproteins at a C-terminal signal peptide (CSP) region that lacks consensus sequence and replaces it with a GPI-anchor via a transamidation reaction. Transamidation catalysis reaction follows a two-phase mechanism. In the acyl-enzyme phase, the carbonyl group of the proproteins's omega-site undergoes a nucleophilic attack forming an enzyme-substrate thioester bond. Followed by a general acid catalysis that allows CSP releasing, regenerating the carbonyl, and forming the acyl-enzyme intermediate. In the GPI-anchor attachment phase, the amino group of the GPI-anchor's ethanolamine phosphate, the one on third mannose (EtNP3), mediates a nucleophilic attack on the carbonyl of the acyl-enzyme intermediate, replacing the CSP, allowing GPI-anchor attachment to the omega-residue, therefore forming the product and freeing the enzyme. The protein is GPI-anchor transamidase of Bos taurus (Bovine).